Reading from the N-terminus, the 361-residue chain is Histidinol-phosphate aminotransferase (361 aa).

Lys219 is modified (N6-(pyridoxal phosphate)lysine).

Belongs to the class-II pyridoxal-phosphate-dependent aminotransferase family. Histidinol-phosphate aminotransferase subfamily. Homodimer. It depends on pyridoxal 5'-phosphate as a cofactor.

It carries out the reaction L-histidinol phosphate + 2-oxoglutarate = 3-(imidazol-4-yl)-2-oxopropyl phosphate + L-glutamate. The protein operates within amino-acid biosynthesis; L-histidine biosynthesis; L-histidine from 5-phospho-alpha-D-ribose 1-diphosphate: step 7/9. The protein is Histidinol-phosphate aminotransferase of Acinetobacter baumannii (strain AB307-0294).